A 122-amino-acid chain; its full sequence is Class I hydrophobin 2 (122 aa).

The N-terminal stretch at 1–22 (MFARVSTLFAMFFLGLALMVSA) is a signal peptide. 4 cysteine pairs are disulfide-bonded: Cys40–Cys101, Cys47–Cys95, Cys48–Cys81, and Cys102–Cys115.

The protein belongs to the fungal hydrophobin family. Self-assembles to form functional amyloid fibrils called rodlets. Self-assembly into fibrillar rodlets occurs spontaneously at hydrophobic:hydrophilic interfaces and the rodlets further associate laterally to form amphipathic monolayers.

The protein localises to the secreted. It localises to the cell wall. In terms of biological role, aerial growth, conidiation, and dispersal of filamentous fungi in the environment rely upon a capability of their secreting small amphipathic proteins called hydrophobins (HPBs) with low sequence identity. Class I can self-assemble into an outermost layer of rodlet bundles on aerial cell surfaces, conferring cellular hydrophobicity that supports fungal growth, development and dispersal; whereas Class II form highly ordered films at water-air interfaces through intermolecular interactions but contribute nothing to the rodlet structure. Hah2 is a class I hydrophobin that is involved in aerial growth of mycelia, but does not play a role in pathogenesis. The sequence is that of Class I hydrophobin 2 from Heterobasidion annosum (Root rot fungus).